A 542-amino-acid polypeptide reads, in one-letter code: CTP synthase (542 aa).

The amidoligase domain stretch occupies residues 1–265 (MARYVFITGG…DSEVLSAFGI (265 aa)). Position 13 (S13) interacts with CTP. S13 provides a ligand contact to UTP. 14 to 19 (SLGKGI) is an ATP binding site. Y54 serves as a coordination point for L-glutamine. Residue D71 participates in ATP binding. The Mg(2+) site is built by D71 and E139. Residues 146–148 (DIE), 186–191 (KTKPTQ), and K222 contribute to the CTP site. Residues 186–191 (KTKPTQ) and K222 each bind UTP. One can recognise a Glutamine amidotransferase type-1 domain in the interval 291–541 (TIAVVGKYTG…IEAAIEQSRL (251 aa)). Residue G353 participates in L-glutamine binding. C380 acts as the Nucleophile; for glutamine hydrolysis in catalysis. L-glutamine contacts are provided by residues 381-384 (FGMQ), E404, and R469. Active-site residues include H514 and E516.

This sequence belongs to the CTP synthase family. In terms of assembly, homotetramer.

The enzyme catalyses UTP + L-glutamine + ATP + H2O = CTP + L-glutamate + ADP + phosphate + 2 H(+). The catalysed reaction is L-glutamine + H2O = L-glutamate + NH4(+). It carries out the reaction UTP + NH4(+) + ATP = CTP + ADP + phosphate + 2 H(+). It functions in the pathway pyrimidine metabolism; CTP biosynthesis via de novo pathway; CTP from UDP: step 2/2. Allosterically activated by GTP, when glutamine is the substrate; GTP has no effect on the reaction when ammonia is the substrate. The allosteric effector GTP functions by stabilizing the protein conformation that binds the tetrahedral intermediate(s) formed during glutamine hydrolysis. Inhibited by the product CTP, via allosteric rather than competitive inhibition. In terms of biological role, catalyzes the ATP-dependent amination of UTP to CTP with either L-glutamine or ammonia as the source of nitrogen. Regulates intracellular CTP levels through interactions with the four ribonucleotide triphosphates. In Brucella suis (strain ATCC 23445 / NCTC 10510), this protein is CTP synthase.